The sequence spans 668 residues: DNA ligase (668 aa).

NAD(+) is bound by residues 32–36 (DSEYD), 81–82 (SL), and glutamate 110. Lysine 112 functions as the N6-AMP-lysine intermediate in the catalytic mechanism. NAD(+) contacts are provided by arginine 133, glutamate 167, lysine 283, and lysine 307. Cysteine 401, cysteine 404, cysteine 419, and cysteine 424 together coordinate Zn(2+). Positions 586-668 (QTDSEFNGKT…IQKQKEVENK (83 aa)) constitute a BRCT domain.

The protein belongs to the NAD-dependent DNA ligase family. LigA subfamily. The cofactor is Mg(2+). Mn(2+) is required as a cofactor.

It carries out the reaction NAD(+) + (deoxyribonucleotide)n-3'-hydroxyl + 5'-phospho-(deoxyribonucleotide)m = (deoxyribonucleotide)n+m + AMP + beta-nicotinamide D-nucleotide.. Functionally, DNA ligase that catalyzes the formation of phosphodiester linkages between 5'-phosphoryl and 3'-hydroxyl groups in double-stranded DNA using NAD as a coenzyme and as the energy source for the reaction. It is essential for DNA replication and repair of damaged DNA. The chain is DNA ligase from Staphylococcus carnosus (strain TM300).